An 806-amino-acid polypeptide reads, in one-letter code: Phosphatidylinositol 4-kinase beta (806 aa).

A PIK helical domain is found at 55–247; that stretch reads LDKVKLIRGS…GTKLRKLILS (193 aa). Disordered stretches follow at residues 69–104 and 253–310; these read LDKI…SASR and AHKK…DEPV. The span at 283–302 shows a compositional bias: polar residues; sequence DATVSISLSSNLKRTSSNPK. Residues 525 to 791 enclose the PI3K/PI4K catalytic domain; sequence EPWQEKVRRI…MVDGSMRSIT (267 aa). A G-loop region spans residues 531–537; sequence VRRIREG. The segment at 658–666 is catalytic loop; it reads QVKDRHNGN. An activation loop region spans residues 677–701; sequence HIDFGFILSSSPRNLGFETSAFKLT.

This sequence belongs to the PI3/PI4-kinase family. Type III PI4K subfamily. Mg(2+) is required as a cofactor. It depends on Mn(2+) as a cofactor.

It localises to the endomembrane system. Its subcellular location is the mitochondrion outer membrane. The protein resides in the rough endoplasmic reticulum membrane. The enzyme catalyses a 1,2-diacyl-sn-glycero-3-phospho-(1D-myo-inositol) + ATP = a 1,2-diacyl-sn-glycero-3-phospho-(1D-myo-inositol 4-phosphate) + ADP + H(+). Phosphorylates phosphatidylinositol (PI) in the first committed step in the production of the second messenger inositol-1,4,5,-trisphosphate (PIP). May play an important role in the inner ear development. In Xenopus tropicalis (Western clawed frog), this protein is Phosphatidylinositol 4-kinase beta (pi4kb).